The sequence spans 213 residues: Orotate phosphoribosyltransferase (213 aa).

Residue Lys-26 coordinates 5-phospho-alpha-D-ribose 1-diphosphate. Orotate is bound at residue 34–35 (FF). 5-phospho-alpha-D-ribose 1-diphosphate is bound by residues 72–73 (YK), Arg-98, Lys-99, Lys-102, His-104, and 123–131 (DDVISAGTS). Ser-127 and Arg-155 together coordinate orotate.

Belongs to the purine/pyrimidine phosphoribosyltransferase family. PyrE subfamily. Homodimer. Mg(2+) is required as a cofactor.

The enzyme catalyses orotidine 5'-phosphate + diphosphate = orotate + 5-phospho-alpha-D-ribose 1-diphosphate. It participates in pyrimidine metabolism; UMP biosynthesis via de novo pathway; UMP from orotate: step 1/2. Functionally, catalyzes the transfer of a ribosyl phosphate group from 5-phosphoribose 1-diphosphate to orotate, leading to the formation of orotidine monophosphate (OMP). This is Orotate phosphoribosyltransferase from Neisseria meningitidis serogroup A / serotype 4A (strain DSM 15465 / Z2491).